Consider the following 281-residue polypeptide: NADPH-dependent 7-cyano-7-deazaguanine reductase (281 aa).

Residue 89 to 91 participates in substrate binding; it reads VES. 91–92 provides a ligand contact to NADPH; it reads SK. Residue C188 is the Thioimide intermediate of the active site. D195 serves as the catalytic Proton donor. 227–228 contributes to the substrate binding site; that stretch reads HE. Residue 256-257 coordinates NADPH; it reads RG.

Belongs to the GTP cyclohydrolase I family. QueF type 2 subfamily. As to quaternary structure, homodimer.

The protein resides in the cytoplasm. The enzyme catalyses 7-aminomethyl-7-carbaguanine + 2 NADP(+) = 7-cyano-7-deazaguanine + 2 NADPH + 3 H(+). Its pathway is tRNA modification; tRNA-queuosine biosynthesis. In terms of biological role, catalyzes the NADPH-dependent reduction of 7-cyano-7-deazaguanine (preQ0) to 7-aminomethyl-7-deazaguanine (preQ1). This chain is NADPH-dependent 7-cyano-7-deazaguanine reductase, found in Azoarcus sp. (strain BH72).